The chain runs to 468 residues: Probable Xaa-Pro aminopeptidase PEPP (468 aa).

4 residues coordinate Mn(2+): Asp-264, Asp-275, Glu-398, and Glu-438.

It belongs to the peptidase M24B family. Mn(2+) is required as a cofactor.

It carries out the reaction Release of any N-terminal amino acid, including proline, that is linked to proline, even from a dipeptide or tripeptide.. In terms of biological role, catalyzes the removal of a penultimate prolyl residue from the N-termini of peptides. In Paracoccidioides brasiliensis (strain Pb18), this protein is Probable Xaa-Pro aminopeptidase PEPP (PEPP).